A 985-amino-acid chain; its full sequence is Ephrin type-A receptor 4-B (985 aa).

A signal peptide spans 1-20 (MAGIVHGILFCGLFGLCWAV). Residues 21–547 (TGSRIYPASE…MIGEGTSPTV (527 aa)) are Extracellular-facing. The region spanning 30–209 (EVTLLDSRSV…FYKKCPLTVR (180 aa)) is the Eph LBD domain. Fibronectin type-III domains are found at residues 328-438 (PPSA…TNQA) and 439-536 (APST…TVPS). 2 N-linked (GlcNAc...) asparagine glycosylation sites follow: N340 and N407. The chain crosses the membrane as a helical span at residues 548–569 (LLVSVAGSIVLVVILIAAFVIS). Over 570–985 (RRRSKYSKAK…QQMQGRMVPV (416 aa)) the chain is Cytoplasmic. Phosphotyrosine; by autocatalysis is present on residues Y595 and Y601. One can recognise a Protein kinase domain in the interval 620–881 (IKIEKVIGVG…QIVSMLDKLI (262 aa)). ATP is bound by residues 626–634 (IGVGEFGEV) and K652. D745 serves as the catalytic Proton acceptor. Residues Y778 and Y927 each carry the phosphotyrosine; by autocatalysis modification. Residues 910–974 (SQVASVLDWL…LSSVQGMRTQ (65 aa)) form the SAM domain. A PDZ-binding motif is present at residues 983-985 (VPV).

This sequence belongs to the protein kinase superfamily. Tyr protein kinase family. Ephrin receptor subfamily. Localized expression in a subset of neural crest and neural tissues in embryos.

The protein resides in the cell membrane. Its subcellular location is the early endosome. The enzyme catalyses L-tyrosyl-[protein] + ATP = O-phospho-L-tyrosyl-[protein] + ADP + H(+). Receptor tyrosine kinase which binds membrane-bound ephrin family ligands residing on adjacent cells, leading to contact-dependent bidirectional signaling into neighboring cells. The signaling pathway downstream of the receptor is referred to as forward signaling while the signaling pathway downstream of the ephrin ligand is referred to as reverse signaling. Highly promiscuous, it has the unique property among Eph receptors to bind and to be physiologically activated by both GPI-anchored ephrin-A and transmembrane ephrin-B ligands including EFNA1 and EFNB3. Upon activation by ephrin ligands, modulates cell morphology and integrin-dependent cell adhesion through regulation of the Rac, Rap and Rho GTPases activity. Plays an important role in the development of the nervous system controlling different steps of axonal guidance including the establishment of the corticospinal projections. This chain is Ephrin type-A receptor 4-B (epha4-b), found in Xenopus laevis (African clawed frog).